The primary structure comprises 324 residues: Geranylgeranyl diphosphate synthase (324 aa).

Lys-46, Arg-49, and His-78 together coordinate isopentenyl diphosphate. Mg(2+)-binding residues include Asp-85 and Asp-89. Arg-94 is a binding site for an all-trans-polyprenyl diphosphate. Arg-95 is an isopentenyl diphosphate binding site. An all-trans-polyprenyl diphosphate contacts are provided by Lys-176, Thr-177, Gln-214, Lys-231, and Lys-241.

It belongs to the FPP/GGPP synthase family. The cofactor is Mg(2+).

It carries out the reaction isopentenyl diphosphate + (2E,6E)-farnesyl diphosphate = (2E,6E,10E)-geranylgeranyl diphosphate + diphosphate. The protein operates within isoprenoid biosynthesis; geranylgeranyl diphosphate biosynthesis; geranylgeranyl diphosphate from farnesyl diphosphate and isopentenyl diphosphate: step 1/1. In terms of biological role, catalyzes the sequential condensation of isopentenyl pyrophosphate with the allylic pyrophosphates to yield geranylgeranyl diphosphate (GGPP) which is a precursor of the ether-linked lipids. The sequence is that of Geranylgeranyl diphosphate synthase from Methanosarcina mazei (strain ATCC BAA-159 / DSM 3647 / Goe1 / Go1 / JCM 11833 / OCM 88) (Methanosarcina frisia).